We begin with the raw amino-acid sequence, 661 residues long: Heme transporter BhuA (661 aa).

Residues 1-23 form the signal peptide; sequence MKFTRTLVLASTSLLATVATSQA. The TBDR plug domain maps to 48–159; it reads KDNIEATGGT…AAGAIRYETV (112 aa). The TBDR beta-barrel domain occupies 170–661; it reads TFGARIIGSY…TFTFQTAFKF (492 aa).

The protein belongs to the TonB-dependent receptor family.

Its subcellular location is the cell outer membrane. In terms of biological role, heme transporter. This is Heme transporter BhuA (bhuA) from Brucella ovis (strain ATCC 25840 / 63/290 / NCTC 10512).